The chain runs to 415 residues: Enolase (415 aa).

Gln-161 lines the (2R)-2-phosphoglycerate pocket. Glu-203 (proton donor) is an active-site residue. Residues Asp-240, Glu-281, and Asp-308 each contribute to the Mg(2+) site. (2R)-2-phosphoglycerate-binding residues include Lys-333, Arg-362, Ser-363, and Lys-384. Lys-333 functions as the Proton acceptor in the catalytic mechanism.

Belongs to the enolase family. It depends on Mg(2+) as a cofactor.

Its subcellular location is the cytoplasm. The protein localises to the secreted. It localises to the cell surface. The catalysed reaction is (2R)-2-phosphoglycerate = phosphoenolpyruvate + H2O. Its pathway is carbohydrate degradation; glycolysis; pyruvate from D-glyceraldehyde 3-phosphate: step 4/5. Catalyzes the reversible conversion of 2-phosphoglycerate (2-PG) into phosphoenolpyruvate (PEP). It is essential for the degradation of carbohydrates via glycolysis. This Campylobacter hominis (strain ATCC BAA-381 / DSM 21671 / CCUG 45161 / LMG 19568 / NCTC 13146 / CH001A) protein is Enolase.